The sequence spans 61 residues: Probable tautomerase lmo2564 (61 aa).

The active-site Proton acceptor; via imino nitrogen is the Pro2.

Belongs to the 4-oxalocrotonate tautomerase family.

The sequence is that of Probable tautomerase lmo2564 from Listeria monocytogenes serovar 1/2a (strain ATCC BAA-679 / EGD-e).